The primary structure comprises 484 residues: MATSAAARFLAALAGAAVLLVLLGGAAGAVVGHDDDAAAARRTMEEFAGFPASDYRGDGGGGSGGSSPFYVDSDGLQRQIDELASFSDSPVPSVTRVLYSDKDVQARRYIKGIMNQLGLSIREDAVGNIFGRWEGSEAGLGAVATGSHVDAIPFSGKYDGVVGVLGALEAIRMLKRSGFQPKRSLEVIMFTSEEPTRFGISCLGSRLMAGSEELARSLKETVDNQNVSFFDAADSAGYKMHPEELHNVFLKKDDYFAFVELHIEQGPILEKEGIKIGVVTAIAAPASIKVEFEGNGGHAGAVLMPARNDAGLAAAELALAVEKHVLESGSIDTVGTVGILQLHPGAINSIPSKSHVEIDVRDIDEKRRNNVIEKVHQSAIEISKNRGVLLSEFKIINQDPPALSDKSVISAMEFAAKQLNLEYKLMISRAYHDSLFMARISPMGMIFIPCYKGYSHKPEEYASPEDMANGVKVLALAMARLSLQ.

An N-terminal signal peptide occupies residues M1 to G28. Mn(2+) contacts are provided by H148, D159, E194, and H262. 2 substrate regions span residues E193–E194 and H262–Q265. Residues A284–D399 form an involved in dimerization region. Substrate contacts are provided by H298, N348, and R361. A substrate region spans residues Y431–H432. H456 serves as a coordination point for Mn(2+). H456 is a binding site for substrate.

This sequence belongs to the peptidase M20 family. In terms of assembly, homodimer. The cofactor is Mn(2+). Ni(2+) serves as cofactor. It depends on Co(2+) as a cofactor.

It localises to the endoplasmic reticulum. The enzyme catalyses (S)-ureidoglycolate + H2O + 2 H(+) = glyoxylate + 2 NH4(+) + CO2. It functions in the pathway nitrogen metabolism; (S)-allantoin degradation; glyoxylate from (S)-ureidoglycolate: step 1/1. In terms of biological role, involved in the catabolism of purine nucleotides. The sequential activity of AAH, UGLYAH and UAH allows a complete purine breakdown without the intermediate generation of urea. The polypeptide is Ureidoglycolate hydrolase (Oryza sativa subsp. japonica (Rice)).